A 497-amino-acid chain; its full sequence is UPF0371 protein cu0538 (497 aa).

This sequence belongs to the UPF0371 family.

This Corynebacterium urealyticum (strain ATCC 43042 / DSM 7109) protein is UPF0371 protein cu0538.